Consider the following 98-residue polypeptide: NADH-ubiquinone oxidoreductase chain 4L (98 aa).

3 helical membrane passes run 1–21 (MPLI…GLLM), 29–49 (ALLC…LLAL), and 61–81 (IILL…LVMI).

This sequence belongs to the complex I subunit 4L family. As to quaternary structure, core subunit of respiratory chain NADH dehydrogenase (Complex I) which is composed of 45 different subunits.

The protein localises to the mitochondrion inner membrane. It catalyses the reaction a ubiquinone + NADH + 5 H(+)(in) = a ubiquinol + NAD(+) + 4 H(+)(out). In terms of biological role, core subunit of the mitochondrial membrane respiratory chain NADH dehydrogenase (Complex I) which catalyzes electron transfer from NADH through the respiratory chain, using ubiquinone as an electron acceptor. Part of the enzyme membrane arm which is embedded in the lipid bilayer and involved in proton translocation. In Kogia breviceps (Pygmy sperm whale), this protein is NADH-ubiquinone oxidoreductase chain 4L (MT-ND4L).